The following is a 269-amino-acid chain: 3'(2'),5'-bisphosphate nucleotidase CysQ (269 aa).

Mg(2+) contacts are provided by E69, D89, L91, D92, and D216. E69 provides a ligand contact to substrate. Residues 91-94 (LDGT) and D216 each bind substrate.

The protein belongs to the inositol monophosphatase superfamily. CysQ family. Requires Mg(2+) as cofactor.

It is found in the cell inner membrane. The catalysed reaction is adenosine 3',5'-bisphosphate + H2O = AMP + phosphate. Functionally, converts adenosine-3',5'-bisphosphate (PAP) to AMP. The polypeptide is 3'(2'),5'-bisphosphate nucleotidase CysQ (Haemophilus influenzae (strain ATCC 51907 / DSM 11121 / KW20 / Rd)).